A 427-amino-acid polypeptide reads, in one-letter code: Peptidase B (427 aa).

The Mn(2+) site is built by Lys195 and Asp200. The active site involves Lys207. Residues Asp218, Asp277, and Glu279 each contribute to the Mn(2+) site. Residue Arg281 is part of the active site.

This sequence belongs to the peptidase M17 family. In terms of assembly, homohexamer. It depends on Mn(2+) as a cofactor.

The protein localises to the cytoplasm. The enzyme catalyses Release of an N-terminal amino acid, Xaa, from a peptide or arylamide. Xaa is preferably Glu or Asp but may be other amino acids, including Leu, Met, His, Cys and Gln.. Probably plays an important role in intracellular peptide degradation. The chain is Peptidase B from Escherichia coli (strain SMS-3-5 / SECEC).